Reading from the N-terminus, the 157-residue chain is Protein FAM218A (157 aa).

The interval 104-127 (PAVTPPKLPGHSKSEGPPGKVRKR) is disordered.

In Homo sapiens (Human), this protein is Protein FAM218A (FAM218A).